The sequence spans 876 residues: DNA gyrase subunit A (876 aa).

Residues 34-532 enclose the Topo IIA-type catalytic domain; sequence LPDVRDGLKP…NSVDINIEDL (499 aa). Catalysis depends on Tyr-122, which acts as the O-(5'-phospho-DNA)-tyrosine intermediate. Positions 559–565 match the GyrA-box motif; that stretch reads QRRGGKG. The tract at residues 844 to 876 is disordered; the sequence is DEELDAIDGSAAEGDEDIAPEADTDDDIAEDEE. A compositionally biased stretch (acidic residues) spans 856–876; that stretch reads EGDEDIAPEADTDDDIAEDEE.

The protein belongs to the type II topoisomerase GyrA/ParC subunit family. Heterotetramer, composed of two GyrA and two GyrB chains. In the heterotetramer, GyrA contains the active site tyrosine that forms a transient covalent intermediate with DNA, while GyrB binds cofactors and catalyzes ATP hydrolysis.

The protein localises to the cytoplasm. The catalysed reaction is ATP-dependent breakage, passage and rejoining of double-stranded DNA.. Its function is as follows. A type II topoisomerase that negatively supercoils closed circular double-stranded (ds) DNA in an ATP-dependent manner to modulate DNA topology and maintain chromosomes in an underwound state. Negative supercoiling favors strand separation, and DNA replication, transcription, recombination and repair, all of which involve strand separation. Also able to catalyze the interconversion of other topological isomers of dsDNA rings, including catenanes and knotted rings. Type II topoisomerases break and join 2 DNA strands simultaneously in an ATP-dependent manner. The sequence is that of DNA gyrase subunit A from Klebsiella oxytoca.